Here is a 123-residue protein sequence, read N- to C-terminus: Ribosome-binding factor A (123 aa).

It belongs to the RbfA family. As to quaternary structure, monomer. Binds 30S ribosomal subunits, but not 50S ribosomal subunits or 70S ribosomes.

The protein resides in the cytoplasm. Functionally, one of several proteins that assist in the late maturation steps of the functional core of the 30S ribosomal subunit. Associates with free 30S ribosomal subunits (but not with 30S subunits that are part of 70S ribosomes or polysomes). Required for efficient processing of 16S rRNA. May interact with the 5'-terminal helix region of 16S rRNA. The sequence is that of Ribosome-binding factor A from Neisseria gonorrhoeae (strain ATCC 700825 / FA 1090).